We begin with the raw amino-acid sequence, 250 residues long: DNA polymerase sliding clamp (250 aa).

It belongs to the PCNA family. As to quaternary structure, homotrimer. The subunits circularize to form a toroid; DNA passes through its center. Replication factor C (RFC) is required to load the toroid on the DNA.

Sliding clamp subunit that acts as a moving platform for DNA processing. Responsible for tethering the catalytic subunit of DNA polymerase and other proteins to DNA during high-speed replication. The sequence is that of DNA polymerase sliding clamp from Methanococcus maripaludis (strain C7 / ATCC BAA-1331).